Here is a 286-residue protein sequence, read N- to C-terminus: Pantothenate synthetase (286 aa).

30–37 (MGYFHEGH) is an ATP binding site. The active-site Proton donor is the His37. Gln61 provides a ligand contact to (R)-pantoate. Residue Gln61 coordinates beta-alanine. Position 147 to 150 (147 to 150 (GKKD)) interacts with ATP. Gln153 lines the (R)-pantoate pocket. Residue 184 to 187 (MSSR) coordinates ATP.

Belongs to the pantothenate synthetase family. In terms of assembly, homodimer.

The protein resides in the cytoplasm. The catalysed reaction is (R)-pantoate + beta-alanine + ATP = (R)-pantothenate + AMP + diphosphate + H(+). It participates in cofactor biosynthesis; (R)-pantothenate biosynthesis; (R)-pantothenate from (R)-pantoate and beta-alanine: step 1/1. Catalyzes the condensation of pantoate with beta-alanine in an ATP-dependent reaction via a pantoyl-adenylate intermediate. This is Pantothenate synthetase from Syntrophus aciditrophicus (strain SB).